We begin with the raw amino-acid sequence, 351 residues long: MPSETLWEIAKAEVEKRRSHGSEGDGAEIGEKSVFFIGSKNGGKTTIILRCLDRDESAKPTLALEYTYGRKTKGHNTPKDIAHFWELGGGTSLLDLISIPITVDTLRTFSIVLVLDLSKPNDLWSTMENLLQATKSHVDKVIMKLGKTSSKASAEMRQRMWSVVQKDHPDRELIDPFPIPLVIIGSKYDIFQDFDPEKRKVICKTLRFVAHYYGASLMFTSKSEALLLKIRGVINQLAFGIDKSKSICVDQNKPLFITAGLDSLCQIGSPPVPDSDIGKLQAHSPMELWKKVYDKLFPPKSTGTLKAVQDPARDPQYAESEVDEMRVQKDQELEHYKRSSSKTWKQIELDS.

Residues 303-335 (GTLKAVQDPARDPQYAESEVDEMRVQKDQELEH) form a disordered region. Residues 323–335 (DEMRVQKDQELEH) show a composition bias toward basic and acidic residues.

The protein belongs to the dynein light intermediate chain family. In terms of assembly, light intermediate chain of the cytoplasmic dynein complex 2, a multisubunit complex composed at least of eleven different proteins. The cytoplasmic dynein 2 complex consists of two catalytic heavy chains (HCs) and a number of non-catalytic subunits presented by intermediate chains (ICs), light intermediate chains (LICs) and light chains (LCs). Among them, a heavy chain (DYNC2H1), two intermediate chains (DYNC2I2 and DYNC2I1), a light intermediate chain (DYNC2LI1), and a light chain (DYNLT2B) are unique to the dynein-2 complex, but a subset of light chains are also shared by dynein-1 and dynein-2 complexes. Dynein-2 complex is built around two copies of cytoplasmic dynein 2 heavy chain 1 (DYNC2H1). The C-terminal region forms the motor domain, which converts the energy from ATP hydrolysis into movement. Its N-terminal region forms the tail, an extended structure that binds the other subunits and holds the two heavy chains in a homodimer. Interacts with DYNC2H1 (via N-terminus); this interaction stabilizes the dynein-2 complex structure. Specifically expressed by ciliated cells in brain, lung, spleen, testis and kidney (at protein level). Enriched in the ependymal layer lining the lateral ventricles (at protein level).

It is found in the cytoplasm. Its subcellular location is the cell projection. The protein resides in the cilium. It localises to the cytoskeleton. The protein localises to the cilium basal body. It is found in the cilium axoneme. Its subcellular location is the microtubule organizing center. The protein resides in the centrosome. In terms of biological role, acts as one of several non-catalytic accessory components of the cytoplasmic dynein 2 complex (dynein-2 complex), a motor protein complex that drives the movement of cargos along microtubules within cilia and flagella in concert with the intraflagellar transport (IFT) system, facilitating the assembly of these organelles. Involved in the regulation of ciliary length. This Mus musculus (Mouse) protein is Cytoplasmic dynein 2 light intermediate chain 1 (Dync2li1).